The sequence spans 227 residues: (S)-2-haloacid dehalogenase (227 aa).

Aspartate 10 (nucleophile) is an active-site residue. An (S)-2-haloacid contacts are provided by residues 11–12, arginine 41, and 118–119; these read LY and SN. The interval 175-180 is important for catalytic activity; sequence SSNAWD.

It belongs to the HAD-like hydrolase superfamily. S-2-haloalkanoic acid dehalogenase family.

The enzyme catalyses an (S)-2-haloacid + H2O = a (2R)-2-hydroxycarboxylate + a halide anion + H(+). The catalysed reaction is (S)-2-chloropropanoate + H2O = (R)-lactate + chloride + H(+). Its function is as follows. Catalyzes the hydrolytic dehalogenation of small (S)-2-haloalkanoic acids to yield the corresponding (R)-2-hydroxyalkanoic acids. Acts on acids of short chain lengths, C(2) to C(4), with inversion of configuration at C-2. Active with 2-halogenated carboxylic acids and converts only the S-isomer (or L-isomer) of 2-chloropropionic acid with inversion of configuration to produce R-lactate (or D-isomer). The protein is (S)-2-haloacid dehalogenase (dhl VII) of Pseudomonas fluorescens.